The chain runs to 679 residues: Glycine--tRNA ligase beta subunit (679 aa).

The protein belongs to the class-II aminoacyl-tRNA synthetase family. Tetramer of two alpha and two beta subunits.

It is found in the cytoplasm. It catalyses the reaction tRNA(Gly) + glycine + ATP = glycyl-tRNA(Gly) + AMP + diphosphate. The sequence is that of Glycine--tRNA ligase beta subunit from Streptococcus agalactiae serotype III (strain NEM316).